Here is a 403-residue protein sequence, read N- to C-terminus: Forkhead box protein Q1 (403 aa).

2 disordered regions span residues 1–75 and 94–116; these read MKLE…PGAE and GAAG…PYTR. Residues 32–48 are compositionally biased toward low complexity; that stretch reads LSAAGDDSLGSDGDCAA. Gly residues predominate over residues 96–107; that stretch reads AGPGAGGAGSGE. The fork-head DNA-binding region spans 119–214; the sequence is KPPYSYIALI…ADGVFRRRRK (96 aa). Positions 216–266 are disordered; sequence LSHRAPVPAPGLRPEEAPGLPAAPPPAPAAPASPRMRSPARQEERASPAGK. Residues 236–246 show a composition bias toward pro residues; that stretch reads PAAPPPAPAAP.

As to expression, expressed predominantly in the stomach, trachea, bladder and salivary gland.

It is found in the nucleus. Plays a role in hair follicle differentiation. This is Forkhead box protein Q1 (FOXQ1) from Homo sapiens (Human).